The following is a 321-amino-acid chain: Methionine import ATP-binding protein MetN (321 aa).

One can recognise an ABC transporter domain in the interval 2-241; that stretch reads INAVDLHKVY…PGSLLARSLF (240 aa). 38–45 lines the ATP pocket; it reads GPSGAGKS.

The protein belongs to the ABC transporter superfamily. Methionine importer (TC 3.A.1.24) family. In terms of assembly, the complex is composed of two ATP-binding proteins (MetN), two transmembrane proteins (MetI) and a solute-binding protein (MetQ).

The protein localises to the cell membrane. It catalyses the reaction L-methionine(out) + ATP + H2O = L-methionine(in) + ADP + phosphate + H(+). It carries out the reaction D-methionine(out) + ATP + H2O = D-methionine(in) + ADP + phosphate + H(+). Its function is as follows. Part of the ABC transporter complex MetNIQ involved in methionine import. Responsible for energy coupling to the transport system. This chain is Methionine import ATP-binding protein MetN, found in Thermobifida fusca (strain YX).